The sequence spans 378 residues: tRNA-specific 2-thiouridylase MnmA (378 aa).

ATP-binding positions include 9–16 (GVSGGVDS) and methionine 35. Positions 94-96 (NPD) are interaction with target base in tRNA. The active-site Nucleophile is the cysteine 99. An intrachain disulfide couples cysteine 99 to cysteine 195. Residue glycine 123 participates in ATP binding. The interaction with tRNA stretch occupies residues 145–147 (KDQ). The Cysteine persulfide intermediate role is filled by cysteine 195. The segment at 307–308 (RY) is interaction with tRNA.

It belongs to the MnmA/TRMU family.

The protein resides in the cytoplasm. It carries out the reaction S-sulfanyl-L-cysteinyl-[protein] + uridine(34) in tRNA + AH2 + ATP = 2-thiouridine(34) in tRNA + L-cysteinyl-[protein] + A + AMP + diphosphate + H(+). Catalyzes the 2-thiolation of uridine at the wobble position (U34) of tRNA, leading to the formation of s(2)U34. The protein is tRNA-specific 2-thiouridylase MnmA of Xanthomonas oryzae pv. oryzae (strain PXO99A).